Consider the following 360-residue polypeptide: Spermidine/putrescine-binding periplasmic protein 1 (360 aa).

The first 16 residues, 1 to 16, serve as a signal peptide directing secretion; it reads MKKFAGLITASFVAAT.

It belongs to the bacterial solute-binding protein PotD/PotF family.

It is found in the periplasm. In terms of biological role, required for the activity of the bacterial periplasmic transport system of putrescine and spermidine. Polyamine binding protein. The protein is Spermidine/putrescine-binding periplasmic protein 1 (potD-B) of Haemophilus influenzae (strain ATCC 51907 / DSM 11121 / KW20 / Rd).